Here is a 421-residue protein sequence, read N- to C-terminus: Protein HOMOLOG OF MAMMALIAN LYST-INTERACTING PROTEIN 5 (421 aa).

Serine 2 is subject to N-acetylserine. The segment at 146–374 (IKEGRKPTPG…KYHYDSSYQP (229 aa)) is disordered. The span at 165–185 (SIPSSGPSGSYDHSASDTNTT) shows a compositional bias: polar residues. Basic and acidic residues predominate over residues 188–207 (HRTELDPPHDSNDDSSHHQF). Positions 245–258 (LPPPTGPSDSPYPH) are enriched in pro residues. Polar residues predominate over residues 278–293 (NYSSHEPSPNSLPNFQ). 2 stretches are compositionally biased toward low complexity: residues 294–308 (SYPS…STSP) and 317–337 (PEPY…SFSS).

This sequence belongs to the VTA1 family. As to quaternary structure, homodimer. Interacts with SKD1/VPS4, VPS60-1, CHMP1A and CHMP1B. Binds to PROS/At4g24370. Interacts with MPK6 and MPK3. Phosphorylated by activated MPK6 and MPK3, this activation is required to trigger multivesicular bodies (MVBs) trafficking upon plant infection.

The protein resides in the cytoplasm. Its subcellular location is the endosome membrane. It localises to the nucleus. It is found in the endosome. The protein localises to the multivesicular body. Functionally, involved in the endosomal multivesicular bodies (MVB) pathway. MVBs contain intraluminal vesicles (ILVs) that are generated by invagination and scission from the limiting membrane of the endosome and are delivered to lysosomes enabling degradation of membrane proteins. Thought to be a cofactor of SKD1/VPS4, which catalyzes the disassembly of membrane-associated ESCRT-III. Target of pathogen-responsive mitogen-activated protein kinases (MPKs) that plays a critical role in plant basal resistance to Pseudomonas syringae in a SKD1-dependent manner by promoting multivesicular bodies (MVBs) trafficking upon plant infection. The chain is Protein HOMOLOG OF MAMMALIAN LYST-INTERACTING PROTEIN 5 from Arabidopsis thaliana (Mouse-ear cress).